The following is a 393-amino-acid chain: MSGDFDTIRDASSSDEVQLVRLLEEKIKSLQIEIENLRKELNYYKAEMEKMLSPPLIEAVVLDVLPDGRVLVRSSSGPNLVVNVASHIDQKLIKPGVSVALNQRGSTILEVLPQKEDPIVKTMEIVEKPNVTYSEIGGLEEQIKELREVVELPLKKPEIFREIGVEPPKGVLLYGPPGTGKTMLAKAVATESNAVFIHVVASEFAQKFVGEGARIVRELFEMAKRKAPSIIFIDEIDAIGAKRIDIGTSGEREIQRTLMQLLAELDGFNPLDNVKIIAATNRIDILDPALLRPGRFDRIIEVPLPDFRGRTEIFNIYLKKMKVEDNINLELLSQLSEGFSGADIKNVCVEAAYMAIRDGRNKVTMKDLVDAITKINVKRNNMESMKERREKYS.

A coiled-coil region spans residues 14 to 53 (SDEVQLVRLLEEKIKSLQIEIENLRKELNYYKAEMEKMLS). Residues 178–183 (GTGKTM) and Tyr317 contribute to the ATP site. Residues 391-393 (KYS) form a docks into pockets in the proteasome alpha-ring to cause gate opening region.

It belongs to the AAA ATPase family. Homohexamer. The hexameric complex has a two-ring architecture resembling a top hat that caps the 20S proteasome core at one or both ends. Upon ATP-binding, the C-terminus of PAN interacts with the alpha-rings of the proteasome core by binding to the intersubunit pockets.

It localises to the cytoplasm. Its function is as follows. ATPase which is responsible for recognizing, binding, unfolding and translocation of substrate proteins into the archaeal 20S proteasome core particle. Is essential for opening the gate of the 20S proteasome via an interaction with its C-terminus, thereby allowing substrate entry and access to the site of proteolysis. Thus, the C-termini of the proteasomal ATPase function like a 'key in a lock' to induce gate opening and therefore regulate proteolysis. Unfolding activity requires energy from ATP hydrolysis, whereas ATP binding alone promotes ATPase-20S proteasome association which triggers gate opening, and supports translocation of unfolded substrates. The protein is Proteasome-activating nucleotidase of Saccharolobus islandicus (strain M.16.27) (Sulfolobus islandicus).